Here is a 318-residue protein sequence, read N- to C-terminus: Putative fimbrium tip subunit Fim1F (318 aa).

An N-terminal signal peptide occupies residues 1–24 (MRFNVVLFMLIVALLGGLSTCSSE). Positions 25-50 (VPIGFDTDELSFDMSLVLLTGDMQTK) are excised as a propeptide.

Belongs to the bacteroidetes fimbrillin superfamily. FimA/Mfa1 family. As to quaternary structure, may be part of the fimbrial tip.

Its subcellular location is the fimbrium. In terms of biological role, putative component of the fimbrium tip. Fimbriae are filamentous appendages on the cell surface that mediate cell adhesion and biofilm formation. The protein is Putative fimbrium tip subunit Fim1F of Parabacteroides distasonis (strain ATCC 8503 / DSM 20701 / CIP 104284 / JCM 5825 / NCTC 11152).